The chain runs to 274 residues: Protein YeeZ (274 aa).

A signal peptide spans 1-24 (MKKVAIVGLGWLGMPLAMSLSARG). Residue 170-177 (GRFFAGKT) coordinates ATP.

In Escherichia coli O157:H7, this protein is Protein YeeZ (yeeZ).